The sequence spans 683 residues: DNA-directed RNA polymerase subunit beta' (683 aa).

Residues Cys-69, Cys-71, Cys-87, and Cys-90 each contribute to the Zn(2+) site. Mg(2+) contacts are provided by Asp-492, Asp-494, and Asp-496.

The protein belongs to the RNA polymerase beta' chain family. RpoC1 subfamily. In plastids the minimal PEP RNA polymerase catalytic core is composed of four subunits: alpha, beta, beta', and beta''. When a (nuclear-encoded) sigma factor is associated with the core the holoenzyme is formed, which can initiate transcription. It depends on Mg(2+) as a cofactor. Zn(2+) serves as cofactor.

The protein resides in the plastid. The protein localises to the chloroplast. The enzyme catalyses RNA(n) + a ribonucleoside 5'-triphosphate = RNA(n+1) + diphosphate. In terms of biological role, DNA-dependent RNA polymerase catalyzes the transcription of DNA into RNA using the four ribonucleoside triphosphates as substrates. This chain is DNA-directed RNA polymerase subunit beta', found in Coffea arabica (Arabian coffee).